The sequence spans 567 residues: Hexose transporter HXT15 (567 aa).

Over residues M1–A19 the composition is skewed to polar residues. The tract at residues M1–W32 is disordered. The Cytoplasmic portion of the chain corresponds to M1–L55. A helical transmembrane segment spans residues G56–W76. Over D77–G112 the chain is Extracellular. A helical transmembrane segment spans residues L113–A133. The Cytoplasmic portion of the chain corresponds to D134–R139. The chain crosses the membrane as a helical span at residues L140–N160. Over H161–K170 the chain is Extracellular. The chain crosses the membrane as a helical span at residues I171–I191. Residues A192 to R197 are Cytoplasmic-facing. Residues G198–S218 form a helical membrane-spanning segment. The Extracellular segment spans residues V219–R232. Residues I233–P253 form a helical membrane-spanning segment. Residues E254–E336 are Cytoplasmic-facing. Residues N337–T353 traverse the membrane as a helical segment. The Extracellular segment spans residues D354–S359. Residues I360–V377 traverse the membrane as a helical segment. Topologically, residues D378–K384 are cytoplasmic. Residues C385–V405 traverse the membrane as a helical segment. Over K406 to V427 the chain is Extracellular. A helical membrane pass occupies residues F428 to V448. Over A449–T465 the chain is Cytoplasmic. Residues A466 to I486 form a helical membrane-spanning segment. A topological domain (extracellular) is located at residue H487. A helical transmembrane segment spans residues F488 to F508. Topologically, residues L509 to N567 are cytoplasmic. The disordered stretch occupies residues S533–S555. Basic and acidic residues predominate over residues S545 to S555.

It belongs to the major facilitator superfamily. Sugar transporter (TC 2.A.1.1) family.

It is found in the membrane. Functionally, probable glucose transporter. This Saccharomyces cerevisiae (strain ATCC 204508 / S288c) (Baker's yeast) protein is Hexose transporter HXT15 (HXT15).